The sequence spans 888 residues: Alanine--tRNA ligase (888 aa).

Positions 564, 568, 676, and 680 each coordinate Zn(2+).

The protein belongs to the class-II aminoacyl-tRNA synthetase family. It depends on Zn(2+) as a cofactor.

Its subcellular location is the cytoplasm. The catalysed reaction is tRNA(Ala) + L-alanine + ATP = L-alanyl-tRNA(Ala) + AMP + diphosphate. Catalyzes the attachment of alanine to tRNA(Ala) in a two-step reaction: alanine is first activated by ATP to form Ala-AMP and then transferred to the acceptor end of tRNA(Ala). Also edits incorrectly charged Ser-tRNA(Ala) and Gly-tRNA(Ala) via its editing domain. The polypeptide is Alanine--tRNA ligase (Bartonella tribocorum (strain CIP 105476 / IBS 506)).